The primary structure comprises 113 residues: Large ribosomal subunit protein uL22 (113 aa).

This sequence belongs to the universal ribosomal protein uL22 family. In terms of assembly, part of the 50S ribosomal subunit.

This protein binds specifically to 23S rRNA; its binding is stimulated by other ribosomal proteins, e.g. L4, L17, and L20. It is important during the early stages of 50S assembly. It makes multiple contacts with different domains of the 23S rRNA in the assembled 50S subunit and ribosome. Functionally, the globular domain of the protein is located near the polypeptide exit tunnel on the outside of the subunit, while an extended beta-hairpin is found that lines the wall of the exit tunnel in the center of the 70S ribosome. The protein is Large ribosomal subunit protein uL22 of Xanthomonas oryzae pv. oryzae (strain MAFF 311018).